The sequence spans 442 residues: Phosphatidylserine synthase 2 (442 aa).

Topologically, residues Met-1–Arg-40 are cytoplasmic. A helical transmembrane segment spans residues Ala-41–Glu-61. Topologically, residues Glu-62–Gly-74 are lumenal. The chain crosses the membrane as a helical span at residues Ile-75–Phe-95. Over Ser-96–Arg-104 the chain is Cytoplasmic. The helical transmembrane segment at Phe-105–Val-125 threads the bilayer. Over Gln-126–Arg-291 the chain is Lumenal. N-linked (GlcNAc...) asparagine glycosylation is found at Asn-159 and Asn-215. Residues Trp-292–Leu-312 form a helical membrane-spanning segment. A topological domain (cytoplasmic) is located at residue Lys-313. Residues Phe-314–Asn-334 traverse the membrane as a helical segment. Over Val-335–Lys-354 the chain is Lumenal. The helical transmembrane segment at Lys-355–Val-375 threads the bilayer. At Lys-376–Thr-381 the chain is on the cytoplasmic side. A helical transmembrane segment spans residues Leu-382–Leu-402. The Lumenal segment spans residues Thr-403–His-442.

The protein belongs to the phosphatidyl serine synthase family.

Its subcellular location is the endoplasmic reticulum membrane. The enzyme catalyses a 1,2-diacyl-sn-glycero-3-phosphoethanolamine + L-serine = a 1,2-diacyl-sn-glycero-3-phospho-L-serine + ethanolamine. The catalysed reaction is 1-hexadecanoyl-2-(9Z-octadecenoyl)-sn-glycero-3-phosphoethanolamine + L-serine = 1-hexadecanoyl-2-(9Z-octadecenoyl)-sn-glycero-3-phospho-L-serine + ethanolamine. It catalyses the reaction 1-hexadecanoyl-2-(4Z,7Z,10Z,13Z,16Z,19Z-docosahexaenoyl)-sn-glycero-3-phosphoethanolamine + L-serine = 1-hexadecanoyl-2-(4Z,7Z,10Z,13Z,16Z,19Z-docosahexaenoyl)-sn-glycero-3-phosphoserine + ethanolamine. It carries out the reaction 1-octadecanoyl-2-(5Z,8Z,11Z,14Z)-eicosatetraenoyl-sn-glycero-3-phosphoethanolamine + L-serine = 1-octadecanoyl-2-(5Z,8Z,11Z,14Z)-eicosatetraenoyl-sn-glycero-3-phosphoserine + ethanolamine. The enzyme catalyses 1-octadecanoyl-2-(4Z,7Z,10Z,13Z,16Z,19Z-docosahexaenoyl)-sn-glycero-3-phosphoethanolamine + L-serine = 1-octadecanoyl-2-(4Z,7Z,10Z,13Z,16Z,19Z-docosahexaenoyl)-sn-glycero-3-phosphoserine + ethanolamine. The catalysed reaction is 1-(1Z-octadecenyl)-2-(4Z,7Z,10Z,13Z,16Z,19Z-docosahexaenoyl)-sn-glycero-3-phosphoethanolamine + L-serine = 1-(1Z-octadecenyl)-2-(4Z,7Z,10Z,13Z,16Z,19Z-docosahexaenoyl)-sn-glycero-3-phospho-L-serine + ethanolamine. It catalyses the reaction 1-octadecanoyl-2-(9Z-octadecenoyl)-sn-glycero-3-phosphoethanolamine + L-serine = 1-octadecanoyl-2-(9Z-octadecenoyl)-sn-glycero-3-phospho-L-serine + ethanolamine. It carries out the reaction 1-(1Z-octadecenyl)-2-(9Z-octadecenoyl)-sn-glycero-3-phosphoethanolamine + L-serine = 1-(1Z-octadecenyl)-2-(9Z-octadecenoyl)-sn-glycero-3-phospho-L-serine + ethanolamine. The enzyme catalyses 1-(1Z-octadecenyl)-2-(5Z,8Z,11Z,14Z- eicosatetraenoyl)-sn-glycero-3-phosphoethanolamine + L-serine = 1-(1Z-octadecenyl)-2-(5Z,8Z,11Z,14Z-eicosatetraenoyl)-sn-glycero-3-phospho-L-serine + ethanolamine. It functions in the pathway phospholipid metabolism; phosphatidylserine biosynthesis. Its function is as follows. Catalyzes a base-exchange reaction in which the polar head group of phosphatidylethanolamine (PE) or phosphatidylcholine (PC) is replaced by L-serine. Catalyzes the conversion of phosphatatidylethanolamine and does not act on phosphatidylcholine. Can utilize both phosphatidylethanolamine (PE) plasmalogen and diacyl PE as substrate and the latter is six times better utilized, indicating the importance of an ester linkage at the sn-1 position. Although it shows no sn-1 fatty acyl preference, exhibits significant preference towards docosahexaenoic acid (22:6n-3) compared with 18:1 or 20:4 at the sn-2 position. This Gallus gallus (Chicken) protein is Phosphatidylserine synthase 2 (PTDSS1).